Consider the following 241-residue polypeptide: Glutathione S-transferase omega-1 (241 aa).

Serine 2 carries the N-acetylserine modification. The GST N-terminal domain occupies 22 to 101 (GLIRVYSMRF…YLDEAYPGKK (80 aa)). Cysteine 32 (nucleophile) is an active-site residue. The residue at position 57 (lysine 57) is an N6-acetyllysine. Residues lysine 59, valine 72, and 85–86 (ES) each bind glutathione. The GST C-terminal domain occupies 106-225 (DPYEKACQKM…HIEPRDLRAF (120 aa)). 3 positions are modified to N6-acetyllysine: lysine 143, lysine 148, and lysine 152.

As to quaternary structure, homodimer. Most abundant in the liver and skeletal muscle; also expressed in heart, diaphragm, colon, thymus, kidney, lung, ovaries, spleen, intestine and pancreas.

It localises to the cytoplasm. The protein localises to the cytosol. It catalyses the reaction RX + glutathione = an S-substituted glutathione + a halide anion + H(+). The enzyme catalyses L-dehydroascorbate + 2 glutathione = glutathione disulfide + L-ascorbate. The catalysed reaction is methylarsonate + 2 glutathione + H(+) = methylarsonous acid + glutathione disulfide + H2O. In terms of biological role, exhibits glutathione-dependent thiol transferase and dehydroascorbate reductase activities. Has S-(phenacyl)glutathione reductase activity. Also has glutathione S-transferase activity. Participates in the biotransformation of inorganic arsenic and reduces monomethylarsonic acid (MMA) and dimethylarsonic acid. The sequence is that of Glutathione S-transferase omega-1 (GSTO1) from Sus scrofa (Pig).